The following is a 105-amino-acid chain: Putative membrane protein insertion efficiency factor (105 aa).

A disordered region spans residues 76 to 105 (GHPGGVDPVPPGPHETPRKTSTHDDEPPSR). A compositionally biased stretch (basic and acidic residues) spans 90–105 (ETPRKTSTHDDEPPSR).

This sequence belongs to the UPF0161 family.

It localises to the cell inner membrane. In terms of biological role, could be involved in insertion of integral membrane proteins into the membrane. In Chromohalobacter salexigens (strain ATCC BAA-138 / DSM 3043 / CIP 106854 / NCIMB 13768 / 1H11), this protein is Putative membrane protein insertion efficiency factor.